The following is a 985-amino-acid chain: Regulator of telomere elongation helicase 1 homolog (985 aa).

The region spanning 7-303 (AGIPVHFPFE…QDMAGDEPKD (297 aa)) is the Helicase ATP-binding domain. Residue 42–49 (SPTGTGKT) participates in ATP binding. Positions 146, 164, 173, and 209 each coordinate [4Fe-4S] cluster. The DEAH box motif lies at 252 to 255 (DEAH). The disordered stretch occupies residues 863–883 (VKIHKRERSSPTAPESSSQVT). Positions 872 to 882 (SPTAPESSSQV) are enriched in polar residues. T874 is subject to Phosphothreonine.

Belongs to the helicase family. RAD3/XPD subfamily. In terms of tissue distribution, expressed in both male germline and somatic cells (at protein level). Expressed in ovarian germline stem cells (at protein level). Expressed in adult testes (at protein level). Expressed in the germarium including germline stem cells.

The protein localises to the nucleus. It localises to the chromosome. It carries out the reaction ATP + H2O = ADP + phosphate + H(+). A probable ATP-dependent DNA helicase implicated in DNA repair and the maintenance of genomic stability. Acts as an anti-recombinase to counteract toxic recombination and limit crossover during meiosis. Regulates meiotic recombination and crossover homeostasis by physically dissociating strand invasion events and thereby promotes noncrossover repair by meiotic synthesis dependent strand annealing (SDSA) as well as disassembly of D loop recombination intermediates. In male germline stem cells (GSCs), plays a role in GSCs maintenance during larval germline development by modulating the expression of genes such as Stat92E and preventing DNA damage-induced checkpoint activation. May play a role in female germline stem cell maintenance. This chain is Regulator of telomere elongation helicase 1 homolog, found in Drosophila melanogaster (Fruit fly).